The following is an 828-amino-acid chain: MVGSQEKKNNHIELSETPATDKNNLNTTHLENTQLSKALSPPTSLPQIQIQMINQNLTHTGIAQNNTEKANRHQYRDSGLQYLTRCFEPLAMLNDSKEDFPTQPSNNIANYPGDIQILPIFDCCEISESIQAISLPNVTSPSKTKDVPGLFLRTISENSKSKSEPECESLISVKESSVMENHTFLFHEQIIMSGQQKCELHEKPKVLVVSPQQVMILYMNKLTPYERTEILTYPQIYFIGANAKKRPGVYGPNNSEYDNEQGAYIHVPHDHVAYRYEMLKIIGKGSFGQVIKAYDHKTHEHVALKIVRNEKRFHRQAQEEIRILHHLRRHDKYNTMNIIHMFDYFTFRNHTCITFELLSINLYELIKKNGFKGFSLQLVRKFAHSLLQCLDALYKNDIIHCDMKPENVLLKQQGRSGIKVIDFGSSCFENQRIYTYIQSRFYRAPEVILGGKYGRAIDMWSLGCILAELLSGHALFPGENESDQLACIIEVLGMPNKNILASSKRSKSFFSPKGYPRYCTVRTMSDGMVVLIGGQSRRGKQRGPPCSKSLSKALDGCKDPLFLNFIRGCLEWDADKRLTPSEALKHPWLRRRLPRPPSSSSGCGGVSGLCSSRNESPVTGQNRNFAAETTASSTSATSISLTIKRENSHSSLRLHHGAVPETDFKLIKSVPEGSSTATKEPMMNSDILPESFRQTTVVSPSKHSADSGGMSCLSAVDVGPSRYYPYMNNNENNRLFSSSLNSSANSLSHLEQATKLDALGEYSASTTPNLLSKNTGYSFNSGSINIDVAQESLVNIASNYALDKSIDIIGKSNVSLHTNKLKVQSKDM.

A compositionally biased stretch (basic and acidic residues) spans 1–14 (MVGSQEKKNNHIEL). The interval 1–26 (MVGSQEKKNNHIELSETPATDKNNLN) is disordered. Residues 17–26 (TPATDKNNLN) are compositionally biased toward polar residues. The region spanning 276–589 (YEMLKIIGKG…PSEALKHPWL (314 aa)) is the Protein kinase domain. Residues 282–290 (IGKGSFGQV) and lysine 305 contribute to the ATP site. The Proton acceptor role is filled by aspartate 402. Position 616 is a phosphoserine (serine 616).

This sequence belongs to the protein kinase superfamily. CMGC Ser/Thr protein kinase family. MNB/DYRK subfamily. Autophosphorylated on tyrosine residues.

The catalysed reaction is L-seryl-[protein] + ATP = O-phospho-L-seryl-[protein] + ADP + H(+). It catalyses the reaction L-threonyl-[protein] + ATP = O-phospho-L-threonyl-[protein] + ADP + H(+). The enzyme catalyses L-tyrosyl-[protein] + ATP = O-phospho-L-tyrosyl-[protein] + ADP + H(+). This Drosophila melanogaster (Fruit fly) protein is Putative dual specificity tyrosine-phosphorylation-regulated kinase 3 homolog (Dyrk3).